The following is a 64-amino-acid chain: Large ribosomal subunit protein bL32 (64 aa).

The tract at residues 1-23 is disordered; the sequence is MAVQKSRVTPSRRGQRRSHDALA.

The protein belongs to the bacterial ribosomal protein bL32 family.

The chain is Large ribosomal subunit protein bL32 from Xylella fastidiosa (strain M23).